The chain runs to 474 residues: MVQLSRKATCNSHGQVSSYFLGWEEYEKNPYDVTKNPQGIIQMGLAENQLCFDLLESWLAQNTDAACFKRDGQSVFRELALFQDYHGLSSFKNAFADFMSENRGNRVSFDSNNLVLTAGATSANETLMFCLADPGDAFLLPTPYYPGFDRDLKWRTGVEIVPIQSSSTNGFRITKLALEEAYEQAKKLDLNVKGILITNPSNPLGTTTTQTELNILFDFITKNKNIHLVSDEIYSGTVFNSSEFISVMEILKNNQLENTDVLNRVHIVCSLSKDLGLPGFRVGAIYSNDKDVISAATKMSSFGLVSSQTQYLLSSLLSDKKFTKNYLRENQKRLKNRQRKLVLGLEAIGIKCLKSNAGLFCWVDMRPLLRSKTFEAEMDLWKKIVYEVKLNISPGSSCHCEEPGWFRVCFANMIDETLKLALKRLKMLVDDENSSRRCQKSKSERLNGSRKKTMSNVSNWVFRLSFHDREAEER.

Substrate is bound by residues Glu-47 and Tyr-85. Lys-273 carries the post-translational modification N6-(pyridoxal phosphate)lysine.

The protein belongs to the class-I pyridoxal-phosphate-dependent aminotransferase family. In terms of assembly, homodimer and heterodimer. In vivo, the relevance of heterodimerization with other ACS enzymes is however unsure. Interacts with XBAT32. Interacts (via its C-terminal region) with ETO1 and EOL1. Pyridoxal 5'-phosphate is required as a cofactor. In terms of processing, ubiquitinated by XBAT32. Ubiquitination probably leads to its subsequent degradation, thus controlling ethylene production. In terms of tissue distribution, expressed in roots, leaves and flowers.

It catalyses the reaction S-adenosyl-L-methionine = 1-aminocyclopropane-1-carboxylate + S-methyl-5'-thioadenosine + H(+). The protein operates within alkene biosynthesis; ethylene biosynthesis via S-adenosyl-L-methionine; ethylene from S-adenosyl-L-methionine: step 1/2. 1-aminocyclopropane-1-carboxylate synthase (ACS) enzymes catalyze the conversion of S-adenosyl-L-methionine (SAM) into 1-aminocyclopropane-1-carboxylate (ACC), a direct precursor of ethylene. In Arabidopsis thaliana (Mouse-ear cress), this protein is 1-aminocyclopropane-1-carboxylate synthase 4 (ACS4).